A 541-amino-acid polypeptide reads, in one-letter code: Solute carrier family 22 member 10 (541 aa).

Residues 1 to 15 (MAFEELLSQVGGLGR) are Cytoplasmic-facing. The chain crosses the membrane as a helical span at residues 16–36 (FQMLHLVFILPSLMLLIPHIL). At 37–145 (LENFAAAIPG…DLVCDYQSLK (109 aa)) the chain is on the extracellular side. N-linked (GlcNAc...) asparagine glycosylation is found at asparagine 56 and asparagine 102. A helical transmembrane segment spans residues 146–166 (SVVQFLLLTGMLVGGIIGGHV). Over 167–193 (SDRFGRRFILRWCLLQLAITDTCAAFA) the chain is Cytoplasmic. Residues 194–214 (PTFPVYCVLRFLAGFSSMIII) form a helical membrane-spanning segment. The Extracellular segment spans residues 215–230 (SNNSLPITEWIRPNSK). The chain crosses the membrane as a helical span at residues 231 to 251 (ALVVILSSGALSIGQIILGGL). Residues 252 to 259 (AYVFRDWQ) are Cytoplasmic-facing. Residues 260 to 280 (TLHVVASVPFFVFFLLSRWLV) traverse the membrane as a helical segment. The Extracellular portion of the chain corresponds to 281 to 349 (ESARWLIITN…LFRNPSMRKR (69 aa)). A helical membrane pass occupies residues 350–370 (ICILVFLRFANTIPFYGTMVN). At 371 to 377 (LQHVGSN) the chain is on the cytoplasmic side. The chain crosses the membrane as a helical span at residues 378 to 398 (IFLLQVLYGAVALIVRCLALL). Over 399-406 (TLNHMGRR) the chain is Extracellular. A helical membrane pass occupies residues 407 to 427 (ISQILFMFLVGLSILANTFVP). Residues 428 to 436 (KEMQTLRVA) are Cytoplasmic-facing. A helical membrane pass occupies residues 437 to 457 (LACLGIGCSAATFSSVAVHFI). Topologically, residues 458–472 (ELIPTVLRARASGID) are extracellular. A helical transmembrane segment spans residues 473-493 (LTASRIGAALAPLLMTLTVFF). The Cytoplasmic segment spans residues 494–495 (TT). Residues 496–516 (LPWIIYGIFPIIGGLIVFLLP) traverse the membrane as a helical segment. Residues 517–541 (ETKNLPLPDTIKDVENQKKNLKEKA) lie on the Extracellular side of the membrane.

This sequence belongs to the major facilitator (TC 2.A.1) superfamily. Organic cation transporter (TC 2.A.1.19) family. In terms of tissue distribution, detected in fetal and adult liver, and in adult kidney.

The protein localises to the membrane. The chain is Solute carrier family 22 member 10 (SLC22A10) from Homo sapiens (Human).